Here is a 164-residue protein sequence, read N- to C-terminus: Neurotrophin-3 (164 aa).

A signal peptide spans 1–3 (IQS). Positions 4–118 (TSMDQGBLSE…GLNRTSRRKR (115 aa)) are excised as a propeptide. The tract at residues 89-126 (LLSENTPLEPPPLYLTEEPMGLNRTSRRKRFAEGKSHR) is disordered. N111 carries N-linked (GlcNAc...) asparagine glycosylation.

This sequence belongs to the NGF-beta family.

The protein localises to the secreted. Its function is as follows. Seems to promote the survival of visceral and proprioceptive sensory neurons. This Cylindrophis ruffus (Red-tailed pipe snake) protein is Neurotrophin-3 (NTF3).